The chain runs to 700 residues: DNA ligase (700 aa).

NAD(+)-binding positions include 42 to 46 (DDEYD), 91 to 92 (SL), and Glu126. The active-site N6-AMP-lysine intermediate is the Lys128. NAD(+)-binding residues include Arg149, Glu184, Lys300, and Lys324. Zn(2+)-binding residues include Cys418, Cys421, Cys436, and Cys441. The 89-residue stretch at 598–686 (TRTDQLSGLN…GLGERGVAED (89 aa)) folds into the BRCT domain.

This sequence belongs to the NAD-dependent DNA ligase family. LigA subfamily. The cofactor is Mn(2+).

It catalyses the reaction NAD(+) + (deoxyribonucleotide)n-3'-hydroxyl + 5'-phospho-(deoxyribonucleotide)m = (deoxyribonucleotide)n+m + AMP + beta-nicotinamide D-nucleotide.. In terms of biological role, DNA ligase that catalyzes the formation of phosphodiester linkages between 5'-phosphoryl and 3'-hydroxyl groups in double-stranded DNA using NAD as a coenzyme and as the energy source for the reaction. It is essential for DNA replication and repair of damaged DNA. The protein is DNA ligase of Deinococcus radiodurans (strain ATCC 13939 / DSM 20539 / JCM 16871 / CCUG 27074 / LMG 4051 / NBRC 15346 / NCIMB 9279 / VKM B-1422 / R1).